The following is a 514-amino-acid chain: Cytochrome P450 94A1 (514 aa).

A helical transmembrane segment spans residues 7-29; that stretch reads EVLLPYLLPLLLLILPTTIFFLT. C458 serves as a coordination point for heme.

The protein belongs to the cytochrome P450 family. Heme is required as a cofactor.

The protein resides in the endoplasmic reticulum membrane. Functionally, catalyzes the omega-hydroxylation of various fatty acids (FA) from 10 to 18 carbon atoms. The substrate specificity is higher for laurate &gt; palmitate &gt; myristate &gt; linolenate &gt; linoleate &gt; oleate &gt; caprate. May play a minor role in cutin synthesis and could be involved in plant defense. The protein is Cytochrome P450 94A1 (CYP94A1) of Vicia sativa (Spring vetch).